Here is a 363-residue protein sequence, read N- to C-terminus: Chorismate synthase (363 aa).

R48 provides a ligand contact to NADP(+). FMN is bound by residues 125–127 (RSS), 238–239 (NA), G278, 293–297 (KPTAS), and R319.

Belongs to the chorismate synthase family. Homotetramer. FMNH2 is required as a cofactor.

The enzyme catalyses 5-O-(1-carboxyvinyl)-3-phosphoshikimate = chorismate + phosphate. Its pathway is metabolic intermediate biosynthesis; chorismate biosynthesis; chorismate from D-erythrose 4-phosphate and phosphoenolpyruvate: step 7/7. Catalyzes the anti-1,4-elimination of the C-3 phosphate and the C-6 proR hydrogen from 5-enolpyruvylshikimate-3-phosphate (EPSP) to yield chorismate, which is the branch point compound that serves as the starting substrate for the three terminal pathways of aromatic amino acid biosynthesis. This reaction introduces a second double bond into the aromatic ring system. In Acinetobacter baumannii (strain AB0057), this protein is Chorismate synthase.